The sequence spans 150 residues: Monooxygenase nsrS (150 aa).

The protein belongs to the avfA family.

It functions in the pathway secondary metabolite biosynthesis. Its function is as follows. Monooxygenase; part of the gene cluster that mediates the biosynthesis of the tetrahydroxanthone dimer neosartorin, which exhibits antibacterial activity. The two different monomeric units appear to be synthesized by the same set of enzymes, among which the Baeyer-Villiger monooxygenase nsrF is the key enzyme for the divergence of the biosynthetic routes. The pathway begins with the synthesis of atrochrysone thioester by the polyketide synthase nsrB. The atrochrysone carboxyl ACP thioesterase nsrC then breaks the thioester bond and releases the atrochrysone carboxylic acid from AacuL. Atrochrysone carboxylic acid is decarboxylated by the decarboxylase nsrE, and oxidized by the anthrone oxygenase nsrD to yield emodin. Emodin is then reduced to emodin hydroquinone by the oxidoreductase nsrR. A-ring reduction by the short chain dehydrogenase nsrJ, dehydration by the scytalone dehydratase-like protein nsrI and probable spontaneous re-oxidation, results in overall deoxygenation to chrysophanol. The Baeyer-Villiger monooxygenase nsrF accepts chrysophanol as a substrate to insert one oxygen atom at two different positions to yield the precursors of both monomric units. NsrF is promiscuous/flexible in interacting with the 2 (non methylated and methylated) aromatic rings of chrysophanol, thus diverging the biosynthetic pathway at this point. After the hydrolysis of the lactones, methylesterification by the methyltransferase nsrG yields respectively moniliphenone and 2,2',6'-trihydroxy-4-methyl-6-methoxya-cyldiphenylmethanone. The next steps are the hydroxylation by the FAD-dependent monooxygenase nsrK, followed by isomerization by the monooxygenase nsrQ. The short chain dehydrogenase/reductase nsrO then catalyzes the C-5 ketoreduction to give the xanthone skeleton of blennolide C and 5-acetylblennolide A. The acetyltransferase nsrL has a strict substrate specificity and uses only blennolide A but not blennolide C to yield 5-acetylblennolide A as the single-acetylated product. In the final step of the biosynthesis, the heterodimerization of the 2 xanthones, blennolide C and 5-acetylblennolide A, is catalyzed by the cytochrome P450 monooxygenase nsrP. NsrP can utilize at least three different xanthones as its substrates to perform the dimerization reaction. The protein is Monooxygenase nsrS of Aspergillus novofumigatus (strain IBT 16806).